Reading from the N-terminus, the 365-residue chain is Aminomethyltransferase (365 aa).

It belongs to the GcvT family. The glycine cleavage system is composed of four proteins: P, T, L and H.

The enzyme catalyses N(6)-[(R)-S(8)-aminomethyldihydrolipoyl]-L-lysyl-[protein] + (6S)-5,6,7,8-tetrahydrofolate = N(6)-[(R)-dihydrolipoyl]-L-lysyl-[protein] + (6R)-5,10-methylene-5,6,7,8-tetrahydrofolate + NH4(+). Functionally, the glycine cleavage system catalyzes the degradation of glycine. The sequence is that of Aminomethyltransferase from Chlorobaculum parvum (strain DSM 263 / NCIMB 8327) (Chlorobium vibrioforme subsp. thiosulfatophilum).